Here is a 518-residue protein sequence, read N- to C-terminus: Calcium/calmodulin-dependent protein kinase kinase cmkC (518 aa).

Positions 1–72 (MANEGAGSLQ…SEYTLSQDDG (72 aa)) are disordered. 2 stretches are compositionally biased toward polar residues: residues 8-17 (SLQQDASPGS) and 60-71 (NARSEYTLSQDD). Positions 81–376 (YVIKQEIGRG…MDELREHPWV (296 aa)) constitute a Protein kinase domain. Residues 87–95 (IGRGSFGAV) and K109 contribute to the ATP site. The disordered stretch occupies residues 119-149 (RAKSQLLRQSRGPKRSSRWPKLPFSSPGTGT). Residue D243 is the Proton acceptor of the active site. The tract at residues 404–409 (FSAITK) is autoinhibitory domain. The tract at residues 407-431 (ITKNFGHVLAVMKAAKKFKSLQGPT) is calmodulin-binding. The disordered stretch occupies residues 453-472 (PTQMDPEESVSLPSPLPYKK).

Belongs to the protein kinase superfamily. Ser/Thr protein kinase family.

The enzyme catalyses L-seryl-[protein] + ATP = O-phospho-L-seryl-[protein] + ADP + H(+). It catalyses the reaction L-threonyl-[protein] + ATP = O-phospho-L-threonyl-[protein] + ADP + H(+). With respect to regulation, activated by Ca(2+)/calmodulin. Binding of calmodulin may relieve intrasteric autoinhibition. Functionally, calcium/calmodulin-dependent protein kinase that operates in the calcium-triggered CaMKK-CaMK1 signaling cascade. Phosphorylates and activates cmkB in vitro. Required in G1-phase of the cell cycle for proper timing of the initial nuclear division after germination as well as for subsequent nuclear division cycles. Required for the normal temporal regulation of nimX activity. The sequence is that of Calcium/calmodulin-dependent protein kinase kinase cmkC from Emericella nidulans (Aspergillus nidulans).